A 241-amino-acid chain; its full sequence is tRNA (guanine-N(7)-)-methyltransferase (241 aa).

The S-adenosyl-L-methionine site is built by Glu-76, Glu-101, Asp-128, and Asp-150. Asp-150 is an active-site residue. Substrate contacts are provided by residues Lys-154, Asp-186, and 219–222 (TRYE).

This sequence belongs to the class I-like SAM-binding methyltransferase superfamily. TrmB family.

It catalyses the reaction guanosine(46) in tRNA + S-adenosyl-L-methionine = N(7)-methylguanosine(46) in tRNA + S-adenosyl-L-homocysteine. It participates in tRNA modification; N(7)-methylguanine-tRNA biosynthesis. Its function is as follows. Catalyzes the formation of N(7)-methylguanine at position 46 (m7G46) in tRNA. The polypeptide is tRNA (guanine-N(7)-)-methyltransferase (Cereibacter sphaeroides (strain ATCC 17023 / DSM 158 / JCM 6121 / CCUG 31486 / LMG 2827 / NBRC 12203 / NCIMB 8253 / ATH 2.4.1.) (Rhodobacter sphaeroides)).